A 1100-amino-acid chain; its full sequence is Exportin-T (1100 aa).

This sequence belongs to the exportin family. In terms of assembly, interacts with CEX1, GSP1, GSP2, NSP1, NUP2 and UTP8.

It is found in the nucleus. It localises to the cytoplasm. TRNA nucleus export receptor which facilitates tRNA translocation across the nuclear pore complex. Preferentially interacts with tRNAs with mature 5'- and 3'-termini and does not distinguish between intron-containing and spliced tRNAs. In the nucleus binds to tRNA and to the Ran-GTPases GSP1 or GSP2 in their active GTP-bound form. Docking of this trimeric complex to the nuclear pore complex (NPC) is mediated through binding to nucleoporins. Upon transit of a nuclear export complex into the cytoplasm, disassembling of the complex and hydrolysis of Ran-GTP to Ran-GDP cause release of the tRNA from the export receptor. The directionality of nuclear export is thought to be conferred by an asymmetric distribution of the GTP- and GDP-bound forms of Ran between the cytoplasm and nucleus. This Saccharomyces cerevisiae (strain ATCC 204508 / S288c) (Baker's yeast) protein is Exportin-T (LOS1).